The primary structure comprises 609 residues: MSQAQINTLASLFDSAIAVLKNDGELPADWQNNSQITRTKDASHGDFASNIALTAAKAAKANPRQVAEKIVNALPENQDIRQIEIAGPGFINVFLNTEAKFAVLDDIFNLQAGFGLSKQFDGQKVQVEFVSANPTSSLHVGHGRGAAFGMSVSNLLEAIGYDVTREYYVNDAGRQMDILATSTYLRYLETNGEPVTFPVNGYQGDYVSDIAQTLKTQHADTYVHRFAEIAKDVPEDAQFEINADGEKVLLSGDKEAHIDGLIANSKALLGSGYELFLNAALSSILADIKDDLNDFGVSYECWFSERSIDSEIEPVLQILEDKGYLYEKDGNIWFKSTDFGDEKDRVVRRANGQSTYFASDIAYHKNKFDRGFDKVVNVWGADHHGYVPRVKAALLALGIDADRLDVVLVQFVALWRGDEKVQMSSRSGKFVTLRELRHEVGNDAARFYYVARKPEVHVDFDLELAKSQSKDNLVYYIQYAHARVCRVLEKLEASGLSVNDAMGAEQQELLVASSEEELIKLLAAYPATLLRSATGYEPHILTNYLKELAALFHGWYDSNRILPVSLTSGETPSADEMAMMQARLRLSKAVRLVISNGLGLLGLSAPSSM.

A 'HIGH' region motif is present at residues 132–142; sequence ANPTSSLHVGH.

The protein belongs to the class-I aminoacyl-tRNA synthetase family. Monomer.

The protein localises to the cytoplasm. It catalyses the reaction tRNA(Arg) + L-arginine + ATP = L-arginyl-tRNA(Arg) + AMP + diphosphate. The polypeptide is Arginine--tRNA ligase (Psychrobacter arcticus (strain DSM 17307 / VKM B-2377 / 273-4)).